The primary structure comprises 869 residues: Protein translocase subunit SecA (869 aa).

ATP is bound by residues Gln-85, 103 to 107 (GEGKT), and Asp-508.

This sequence belongs to the SecA family. As to quaternary structure, monomer and homodimer. Part of the essential Sec protein translocation apparatus which comprises SecA, SecYEG and auxiliary proteins SecDF. Other proteins may also be involved.

It is found in the cell membrane. Its subcellular location is the cytoplasm. It catalyses the reaction ATP + H2O + cellular proteinSide 1 = ADP + phosphate + cellular proteinSide 2.. Its function is as follows. Part of the Sec protein translocase complex. Interacts with the SecYEG preprotein conducting channel. Has a central role in coupling the hydrolysis of ATP to the transfer of proteins into and across the cell membrane, serving as an ATP-driven molecular motor driving the stepwise translocation of polypeptide chains across the membrane. The sequence is that of Protein translocase subunit SecA from Deinococcus geothermalis (strain DSM 11300 / CIP 105573 / AG-3a).